We begin with the raw amino-acid sequence, 219 residues long: N-(5'-phosphoribosyl)anthranilate isomerase (219 aa).

It belongs to the TrpF family.

It carries out the reaction N-(5-phospho-beta-D-ribosyl)anthranilate = 1-(2-carboxyphenylamino)-1-deoxy-D-ribulose 5-phosphate. The protein operates within amino-acid biosynthesis; L-tryptophan biosynthesis; L-tryptophan from chorismate: step 3/5. The chain is N-(5'-phosphoribosyl)anthranilate isomerase from Bradyrhizobium sp. (strain ORS 278).